A 244-amino-acid polypeptide reads, in one-letter code: Large ribosomal subunit protein uL2 (244 aa).

Composition is skewed to basic residues over residues 1–12 (MGKRPLVRRRGR) and 234–244 (KTGRARIKERK). Disordered stretches follow at residues 1 to 30 (MGKR…TKAN) and 203 to 244 (HGGG…KERK).

Belongs to the universal ribosomal protein uL2 family. In terms of assembly, part of the 50S ribosomal subunit. Forms a bridge to the 30S subunit in the 70S ribosome.

One of the primary rRNA binding proteins. Required for association of the 30S and 50S subunits to form the 70S ribosome, for tRNA binding and peptide bond formation. It has been suggested to have peptidyltransferase activity; this is somewhat controversial. Makes several contacts with the 16S rRNA in the 70S ribosome. This is Large ribosomal subunit protein uL2 from Nitrosopumilus maritimus (strain SCM1).